The sequence spans 485 residues: UDP-N-acetylmuramate--L-alanine ligase (485 aa).

Residue 120–126 (GSHGKTT) participates in ATP binding.

Belongs to the MurCDEF family.

Its subcellular location is the cytoplasm. It carries out the reaction UDP-N-acetyl-alpha-D-muramate + L-alanine + ATP = UDP-N-acetyl-alpha-D-muramoyl-L-alanine + ADP + phosphate + H(+). The protein operates within cell wall biogenesis; peptidoglycan biosynthesis. In terms of biological role, cell wall formation. The sequence is that of UDP-N-acetylmuramate--L-alanine ligase from Rickettsia rickettsii (strain Iowa).